Here is a 101-residue protein sequence, read N- to C-terminus: Urease subunit beta (101 aa).

It belongs to the urease beta subunit family. Heterotrimer of UreA (gamma), UreB (beta) and UreC (alpha) subunits. Three heterotrimers associate to form the active enzyme.

The protein localises to the cytoplasm. The catalysed reaction is urea + 2 H2O + H(+) = hydrogencarbonate + 2 NH4(+). Its pathway is nitrogen metabolism; urea degradation; CO(2) and NH(3) from urea (urease route): step 1/1. The sequence is that of Urease subunit beta from Variovorax paradoxus (strain S110).